The sequence spans 429 residues: Phosphoribosylamine--glycine ligase (429 aa).

One can recognise an ATP-grasp domain in the interval 109–316; it reads KDFLARHQIP…LVDLCLAACD (208 aa). 135–196 is an ATP binding site; sequence LREKGAPIVI…EEFLDGEEAS (62 aa). Mg(2+) contacts are provided by Glu-286 and Asn-288.

Belongs to the GARS family. Monomer. It depends on Mg(2+) as a cofactor. Mn(2+) is required as a cofactor.

It catalyses the reaction 5-phospho-beta-D-ribosylamine + glycine + ATP = N(1)-(5-phospho-beta-D-ribosyl)glycinamide + ADP + phosphate + H(+). Its pathway is purine metabolism; IMP biosynthesis via de novo pathway; N(1)-(5-phospho-D-ribosyl)glycinamide from 5-phospho-alpha-D-ribose 1-diphosphate: step 2/2. The chain is Phosphoribosylamine--glycine ligase from Salmonella typhi.